The sequence spans 277 residues: MEVFSRSNPYRGPVKGVVLDWAGTTVDYGCIGPLSVFVEVFRHNWVEVTIEEARAPMGLSREDHLRAMCRAESVARKWEDVHGAPPSEMDIGNMARMVEAHLAYTIAQHADLIPGVVEAVEALRGQGIRIGSSTGYTSDMMDMLVPAVEENGYRPDSIVCASDVPAGRPFPWMCYQNAINLEVYPMAAMVKIGDTVADIREGLNAGMWTIGLTLTGNELGLSEEEVAAMDPEELRRRMDNIEQRFRNAGAHFVAQGLRDCPAVIRDINELLAGGERP.

It belongs to the HAD-like hydrolase superfamily. PhnX family.

This Syntrophobacter fumaroxidans (strain DSM 10017 / MPOB) protein is Phosphonoacetaldehyde hydrolase-like protein (phnX2).